A 663-amino-acid polypeptide reads, in one-letter code: Sodium/potassium/calcium exchanger 1 (663 aa).

Residues 32–128 (SPSAIPALLT…DLFSVEERRQ (97 aa)) are Extracellular-facing. 3 N-linked (GlcNAc...) asparagine glycosylation sites follow: Asn59, Asn66, and Asn100. Residues 129–149 (GWVVLHIFGMMYVFVALAIVC) form a helical membrane-spanning segment. Over 150–173 (DEYFVPALGVITEKLQISEDVAGA) the chain is Cytoplasmic. One copy of the Alpha-1 repeat lies at 170–210 (VAGATFMAAGGSAPELFTSLIGVFISHSNVGIGTIVGSAVF). The helical transmembrane segment at 174 to 194 (TFMAAGGSAPELFTSLIGVFI) threads the bilayer. The Extracellular segment spans residues 195–200 (SHSNVG). A helical transmembrane segment spans residues 201-221 (IGTIVGSAVFNILFVIGTCAL). The Cytoplasmic portion of the chain corresponds to 222 to 228 (FSREILH). Residues 229 to 253 (LTWWPLFRDISFYIVDLLMLILFFL) form a helical membrane-spanning segment. Residues 254–259 (DSVIDW) lie on the Extracellular side of the membrane. The helical transmembrane segment at 260–276 (WESLLLLTAYATYVFTM) threads the bilayer. Residues 277–471 (KHNVSLEQWV…SLEWPETRKK (195 aa)) are Cytoplasmic-facing. Disordered stretches follow at residues 308 to 343 (KSSVAVAEDGTKPADGKKLQPTTALQRGTSSASLHN) and 384 to 465 (LTGQ…SLEW). Over residues 316 to 325 (DGTKPADGKK) the composition is skewed to basic and acidic residues. 2 stretches are compositionally biased toward polar residues: residues 327–343 (QPTTALQRGTSSASLHN) and 399–412 (ASQNTVQVTPASDS). Ser337 bears the Phosphoserine mark. Positions 413 to 423 (EPSKDKQKEDT) are enriched in basic and acidic residues. Residues 434 to 461 (DNSEDSSSDSEDDSDDDSTDDEENDEPL) show a composition bias toward acidic residues. Residues 472 to 492 (QAIYLFLFPIVFPLWSTIPDV) form a helical membrane-spanning segment. The Extracellular segment spans residues 493 to 499 (RNPDSKK). A helical transmembrane segment spans residues 500–520 (FFVITFFGSIIWIAAFSYLMV). At 521–535 (WWAHQVGETIGISEE) the chain is on the cytoplasmic side. A helical membrane pass occupies residues 536–556 (IMGLTILAAGTSIPDLITSVI). Residues 543–574 (AAGTSIPDLITSVIVARKGLGDMAVSSSVGSN) form an Alpha-2 repeat. Residues 557–574 (VARKGLGDMAVSSSVGSN) lie on the Extracellular side of the membrane. A helical membrane pass occupies residues 575 to 595 (IFDITVGLPVPWFLYSVFNGF). Residues 596 to 604 (SPVAVSSNG) lie on the Cytoplasmic side of the membrane. The helical transmembrane segment at 605-625 (LFCAIVLLFLMLLFVIISIAL) threads the bilayer. Topologically, residues 626–632 (CKWKMNK) are extracellular. Residues 633-653 (ILGVTMFALYFVFLIISVMLE) traverse the membrane as a helical segment. The Cytoplasmic portion of the chain corresponds to 654–663 (DRIISCPVSV).

Belongs to the Ca(2+):cation antiporter (CaCA) (TC 2.A.19) family. SLC24A subfamily. The uncleaved signal sequence is required for efficient membrane targeting and proper membrane integration and topology. As to expression, retinal rods. Localizes to the inner segment of rod photoreceptors.

It localises to the cell membrane. The catalysed reaction is Ca(2+)(out) + K(+)(out) + 4 Na(+)(in) = Ca(2+)(in) + K(+)(in) + 4 Na(+)(out). In terms of biological role, calcium, potassium:sodium antiporter that transports 1 Ca(2+) and 1 K(+) in exchange for 4 Na(+). Critical component of the visual transduction cascade, controlling the calcium concentration of outer segments during light and darkness. Light causes a rapid lowering of cytosolic free calcium in the outer segment of both retinal rod and cone photoreceptors and the light-induced lowering of calcium is caused by extrusion via this protein which plays a key role in the process of light adaptation. The polypeptide is Sodium/potassium/calcium exchanger 1 (SLC24A1) (Gallus gallus (Chicken)).